The following is a 783-amino-acid chain: Protein SCARECROW (783 aa).

The tract at residues 298-387 is disordered; sequence QPQSQDAITH…QSPPASENTA (90 aa). Low complexity-rich tracts occupy residues 342-353 and 372-384; these read PSSLPFVPVPSS and ESQS…PASE. Positions 387 to 418 form a coiled coil; that stretch reads AAAALIRTESIMRREKEELEQQKKDEEGLHLL. Positions 408–777 constitute a GRAS domain; sequence QKKDEEGLHL…LCLLTASAWR (370 aa). Positions 415–478 are leucine repeat I (LRI); the sequence is LHLLTLLLQC…LVNSCLGIYA (64 aa). The LxCxE motif motif lies at 422-426; it reads LQCAE. The VHIID stretch occupies residues 497-562; it reads FQVFNGISPF…GGPPLVRLTG (66 aa). The VHIID signature appears at 528-532; that stretch reads VHIID. Positions 572 to 604 are leucine repeat II (LRII); the sequence is ATGKRLSDFAQKLGLPFEFFPVADKVGNLDPQR. The PFYRE stretch occupies residues 613 to 700; sequence VAVHWLQHSL…QQLLSREIRN (88 aa). Residues 703–777 form an SAW region; that stretch reads AVGGPSRSGE…LCLLTASAWR (75 aa).

The protein belongs to the GRAS family.

Its subcellular location is the nucleus. In terms of biological role, putative transcription factor involved in asymmetric cell division. Required for differentiation of endodermis and graviresponses. This is Protein SCARECROW (SCR) from Ipomoea nil (Japanese morning glory).